We begin with the raw amino-acid sequence, 205 residues long: Large ribosomal subunit protein uL3 (205 aa).

This sequence belongs to the universal ribosomal protein uL3 family. As to quaternary structure, part of the 50S ribosomal subunit. Forms a cluster with proteins L14 and L19.

One of the primary rRNA binding proteins, it binds directly near the 3'-end of the 23S rRNA, where it nucleates assembly of the 50S subunit. The polypeptide is Large ribosomal subunit protein uL3 (Thermosipho melanesiensis (strain DSM 12029 / CIP 104789 / BI429)).